A 176-amino-acid chain; its full sequence is Inner membrane-spanning protein YciB (176 aa).

5 helical membrane passes run 24-44 (TATA…AFRH), 49-69 (PMLW…LVLH), 76-96 (WKPT…ALGF), 121-141 (YVWA…AYNF), and 149-169 (FKLF…SLWL).

It belongs to the YciB family.

It is found in the cell inner membrane. Its function is as follows. Plays a role in cell envelope biogenesis, maintenance of cell envelope integrity and membrane homeostasis. This is Inner membrane-spanning protein YciB from Paraburkholderia phymatum (strain DSM 17167 / CIP 108236 / LMG 21445 / STM815) (Burkholderia phymatum).